Here is a 538-residue protein sequence, read N- to C-terminus: Syncytin-1 (538 aa).

The first 20 residues, 1-20, serve as a signal peptide directing secretion; sequence MALPYHILLFTVLLPSFTLT. The Extracellular segment spans residues 21–443; that stretch reads APPPCRCMTS…NTGPWGLLSQ (423 aa). Asparagine 169 carries N-linked (GlcNAc...) asparagine glycosylation. The short motif at 186 to 189 is the CXXC element; the sequence is CWIC. Cystine bridges form between cysteine 186/cysteine 189, cysteine 186/cysteine 405, and cysteine 397/cysteine 404. Residues asparagine 208, asparagine 214, asparagine 234, and asparagine 281 are each glycosylated (N-linked (GlcNAc...) asparagine). The tract at residues 320 to 340 is fusion peptide; sequence ILPFVIGAGVLGALGTGIGGI. An immunosuppression region spans residues 380 to 396; the sequence is LQNRRALDLLTAERGGT. Positions 397-405 match the CX6CC motif; the sequence is CLFLGEECC. N-linked (GlcNAc...) asparagine glycosylation is present at asparagine 409. A helical membrane pass occupies residues 444 to 464; the sequence is WMPWILPFLGPLAAIILLLLF. An essential for the fusiogenic function region spans residues 465 to 484; that stretch reads GPCIFNLLVNFVSSRIEAVK. At 465–538 the chain is on the cytoplasmic side; the sequence is GPCIFNLLVN…LLRPNSAGSS (74 aa). The segment at 496–538 is disordered; that stretch reads KIYRRPLDRPASPRSDVNDIKCTPPEEISTAQPLLRPNSAGSS.

Belongs to the gamma type-C retroviral envelope protein family. HERV class-I W env subfamily. The mature envelope protein (Env) consists of a trimer of SU-TM heterodimers attached probably by a labile interchain disulfide bond. Interacts with the C-type lectin CD209/DC-SIGN. Post-translationally, specific enzymatic cleavages in vivo yield mature proteins. Envelope glycoproteins are synthesized as an inactive precursor that is heavily N-glycosylated and processed likely by furin in the Golgi to yield the mature SU and TM proteins. The cleavage site between SU and TM requires the minimal sequence [KR]-X-[KR]-R. In terms of processing, the CXXC motif is highly conserved across a broad range of retroviral envelope proteins. It is thought to participate in the formation of a labile disulfide bond possibly with the CX6CC motif present in the transmembrane protein.

The protein resides in the cell membrane. It localises to the virion. In terms of biological role, this endogenous retroviral envelope protein has retained its original fusogenic properties and participates in trophoblast fusion and the formation of a syncytium during placenta morphogenesis. May recognize and induce fusion through binding of SLC1A4 and SLC1A5. Its function is as follows. Endogenous envelope proteins may have kept, lost or modified their original function during evolution. Retroviral envelope proteins mediate receptor recognition and membrane fusion during early infection. The surface protein (SU) mediates receptor recognition, while the transmembrane protein (TM) acts as a class I viral fusion protein. The protein may have at least 3 conformational states: pre-fusion native state, pre-hairpin intermediate state, and post-fusion hairpin state. During viral and target cell membrane fusion, the coiled coil regions (heptad repeats) assume a trimer-of-hairpins structure, positioning the fusion peptide in close proximity to the C-terminal region of the ectodomain. The formation of this structure appears to drive apposition and subsequent fusion of membranes. The chain is Syncytin-1 (ERVW-1) from Gorilla gorilla gorilla (Western lowland gorilla).